A 441-amino-acid polypeptide reads, in one-letter code: tRNA modification GTPase MnmE (441 aa).

Residues Arg-24, Glu-81, and Lys-121 each coordinate (6S)-5-formyl-5,6,7,8-tetrahydrofolate. Residues 218 to 366 enclose the TrmE-type G domain; sequence GMVVAIAGPP…LLRELTRFAA (149 aa). GTP contacts are provided by residues 228-233, 247-253, and 272-275; these read NVGKST, SPHAGTT, and DTAG. Mg(2+)-binding residues include Ser-232 and Thr-253. A (6S)-5-formyl-5,6,7,8-tetrahydrofolate-binding site is contributed by Lys-441.

The protein belongs to the TRAFAC class TrmE-Era-EngA-EngB-Septin-like GTPase superfamily. TrmE GTPase family. Homodimer. Heterotetramer of two MnmE and two MnmG subunits. K(+) is required as a cofactor.

It localises to the cytoplasm. In terms of biological role, exhibits a very high intrinsic GTPase hydrolysis rate. Involved in the addition of a carboxymethylaminomethyl (cmnm) group at the wobble position (U34) of certain tRNAs, forming tRNA-cmnm(5)s(2)U34. The protein is tRNA modification GTPase MnmE of Rhodopseudomonas palustris (strain ATCC BAA-98 / CGA009).